The sequence spans 256 residues: uncharacterized protein (256 aa).

Residues 1-22 (MKSIKRIGLCISLLILSIFVTS) form the signal peptide. A lipid anchor (N-palmitoyl cysteine) is attached at cysteine 23. Cysteine 23 carries the S-diacylglycerol cysteine lipid modification.

This sequence belongs to the staphylococcal tandem lipoprotein family.

It localises to the cell membrane. This is an uncharacterized protein from Staphylococcus aureus (strain USA300).